The primary structure comprises 486 residues: Photosystem II CP43 reaction center protein (486 aa).

Residues 1–28 (MKVFVHGWQHKISHTRILYSLRRFYHVE) constitute a propeptide that is removed on maturation. A run of 5 helical transmembrane segments spans residues 82 to 106 (LFEVAHFIPEKPLYEQGFILIPHLA), 147 to 168 (LIGPDTLEESFPFFGYDWRDKN), 191 to 213 (KALFFGGVYDTWAPGGGDVRLIN), 268 to 288 (KPFAWARRAFVWSGEAYLSYS), and 304 to 325 (WYNNTAYPSEFYGPTGPEASQA). Glu380 lines the [CaMn4O5] cluster pocket. A helical transmembrane segment spans residues 460 to 484 (RARAAAAGFEKGINRENEAVLSMRP).

This sequence belongs to the PsbB/PsbC family. PsbC subfamily. In terms of assembly, PSII is composed of 1 copy each of membrane proteins PsbA, PsbB, PsbC, PsbD, PsbE, PsbF, PsbH, PsbI, PsbJ, PsbK, PsbL, PsbM, PsbT, PsbX, PsbY, PsbZ, Psb30/Ycf12, at least 3 peripheral proteins of the oxygen-evolving complex and a large number of cofactors. It forms dimeric complexes. Binds multiple chlorophylls and provides some of the ligands for the Ca-4Mn-5O cluster of the oxygen-evolving complex. It may also provide a ligand for a Cl- that is required for oxygen evolution. PSII binds additional chlorophylls, carotenoids and specific lipids. is required as a cofactor.

The protein resides in the plastid. It localises to the chloroplast thylakoid membrane. Functionally, one of the components of the core complex of photosystem II (PSII). It binds chlorophyll and helps catalyze the primary light-induced photochemical processes of PSII. PSII is a light-driven water:plastoquinone oxidoreductase, using light energy to abstract electrons from H(2)O, generating O(2) and a proton gradient subsequently used for ATP formation. The chain is Photosystem II CP43 reaction center protein from Gracilaria tenuistipitata var. liui (Red alga).